Consider the following 181-residue polypeptide: Ribonuclease HII (181 aa).

Positions 1 to 181 constitute an RNase H type-2 domain; it reads MICGIDEVGR…SLHRKSFRLI (181 aa). Residues D6, E7, and D98 each contribute to the a divalent metal cation site.

It belongs to the RNase HII family. Requires Mn(2+) as cofactor. Mg(2+) is required as a cofactor.

It localises to the cytoplasm. The catalysed reaction is Endonucleolytic cleavage to 5'-phosphomonoester.. Endonuclease that specifically degrades the RNA of RNA-DNA hybrids. The protein is Ribonuclease HII of Borrelia recurrentis (strain A1).